Reading from the N-terminus, the 406-residue chain is Lysosome-associated membrane glycoprotein 1 (406 aa).

Residues 1 to 24 (MAAPGARRPLLLLLLAGLAHGASA) form the signal peptide. A first lumenal domain region spans residues 25–188 (LFEVKNNGTT…SKEETHCTQD (164 aa)). Residues 25–370 (LFEVKNNGTT…VEECVQDGNN (346 aa)) lie on the Lumenal side of the membrane. 10 N-linked (GlcNAc...) asparagine glycosylation sites follow: N31, N52, N58, N70, N78, N97, N101, N115, N159, and N177. A disulfide bridge connects residues C35 and C74. An intrachain disulfide couples C149 to C185. Residues 180-207 (KEETHCTQDGPSPTTGPPSPSPPLVPTN) form a disordered region. The interval 189–218 (GPSPTTGPPSPSPPLVPTNPTVSKYNVTGN) is hinge. The span at 193–205 (TTGPPSPSPPLVP) shows a compositional bias: pro residues. Residues N214, N219, N232, and N240 are each glycosylated (N-linked (GlcNAc...) asparagine). The second lumenal domain stretch occupies residues 219 to 370 (NGTCLLASMA…VEECVQDGNN (152 aa)). C222 and C259 are oxidised to a cystine. N-linked (GlcNAc...) (high mannose) asparagine glycosylation is present at N252. Residues N282, N296, and N311 are each glycosylated (N-linked (GlcNAc...) asparagine). Residues C327 and C364 are joined by a disulfide bond. Residues 371 to 394 (MLIPIAVGGALAGLVLIVLIAYLI) form a helical membrane-spanning segment. The Cytoplasmic portion of the chain corresponds to 395–406 (GRKRSHAGYQTI).

Belongs to the LAMP family. In terms of assembly, interacts with ABCB9; this interaction strongly stabilizes ABCB9 and protects ABCB9 against lysosomal degradation. Interacts with FURIN. Interacts with TMEM175; inhibiting the proton channel activity of TMEM175. O- and N-glycosylated; some of the N-glycans attached to LAMP-1 are polylactosaminoglycans.

The protein localises to the lysosome membrane. It is found in the endosome membrane. The protein resides in the late endosome membrane. It localises to the cell membrane. Its subcellular location is the cytolytic granule membrane. Lysosomal membrane glycoprotein which plays an important role in lysosome biogenesis, lysosomal pH regulation, autophagy and cholesterol homeostasis. Acts as an important regulator of lysosomal lumen pH regulation by acting as a direct inhibitor of the proton channel TMEM175, facilitating lysosomal acidification for optimal hydrolase activity. Also plays an important role in NK-cells cytotoxicity. Mechanistically, participates in cytotoxic granule movement to the cell surface and perforin trafficking to the lytic granule. In addition, protects NK-cells from degranulation-associated damage induced by their own cytotoxic granule content. Presents carbohydrate ligands to selectins. Also implicated in tumor cell metastasis. The chain is Lysosome-associated membrane glycoprotein 1 (Lamp1) from Mus musculus (Mouse).